Consider the following 81-residue polypeptide: Cytotoxin 1 (81 aa).

The signal sequence occupies residues 1 to 21; sequence MKTLLLTLVVVTIVCLDLGYT. 4 cysteine pairs are disulfide-bonded: C24–C42, C35–C59, C63–C74, and C75–C80.

This sequence belongs to the three-finger toxin family. Short-chain subfamily. Type IA cytotoxin sub-subfamily. As to quaternary structure, monomer in solution; homodimer and oligomer in the presence of negatively charged lipids forming a pore with a size ranging between 20 and 30 Angstroms. As to expression, expressed by the venom gland.

It is found in the secreted. The protein resides in the target cell membrane. Its function is as follows. Shows cytolytic activity on many different cells by forming pores in lipid membranes. Exhibits concentration-dependent growth inhibitory effects in the lung cell lines A549 (IC(50)= 0.88) and NL20 (IC(50)= 1.91), in the prostate cell lines PC-3 (IC(50)= 3.13 ug/ml) and RWPE-1 (IC(50)=0.35 ug/ml), and in the breast cell lines MCF-7 (IC(50)= 9.10 ug/ml) and 184B5 (IC(50)=6.21 ug/ml), with high selectivity for the lung cancer cell line A549 (selectivity index=2.17). Induces primarily necrosis in the A549 lung cancer cell line, and mainly caspase-independent late apoptosis in the breast cancer cells line MCF-7 and in the prostate cancer cell line PC-3. The polypeptide is Cytotoxin 1 (Naja sumatrana (Equatorial spitting cobra)).